Reading from the N-terminus, the 341-residue chain is S-adenosylmethionine:tRNA ribosyltransferase-isomerase (341 aa).

Belongs to the QueA family. Monomer.

Its subcellular location is the cytoplasm. It carries out the reaction 7-aminomethyl-7-carbaguanosine(34) in tRNA + S-adenosyl-L-methionine = epoxyqueuosine(34) in tRNA + adenine + L-methionine + 2 H(+). It participates in tRNA modification; tRNA-queuosine biosynthesis. Its function is as follows. Transfers and isomerizes the ribose moiety from AdoMet to the 7-aminomethyl group of 7-deazaguanine (preQ1-tRNA) to give epoxyqueuosine (oQ-tRNA). The sequence is that of S-adenosylmethionine:tRNA ribosyltransferase-isomerase from Caldanaerobacter subterraneus subsp. tengcongensis (strain DSM 15242 / JCM 11007 / NBRC 100824 / MB4) (Thermoanaerobacter tengcongensis).